A 426-amino-acid chain; its full sequence is Serine--tRNA ligase (426 aa).

233–235 (TSE) serves as a coordination point for L-serine. Residue 264 to 266 (RAE) coordinates ATP. Glu-287 provides a ligand contact to L-serine. 351–354 (EISS) lines the ATP pocket. Ser-387 contributes to the L-serine binding site.

This sequence belongs to the class-II aminoacyl-tRNA synthetase family. Type-1 seryl-tRNA synthetase subfamily. Homodimer. The tRNA molecule binds across the dimer.

Its subcellular location is the cytoplasm. It catalyses the reaction tRNA(Ser) + L-serine + ATP = L-seryl-tRNA(Ser) + AMP + diphosphate + H(+). It carries out the reaction tRNA(Sec) + L-serine + ATP = L-seryl-tRNA(Sec) + AMP + diphosphate + H(+). Its pathway is aminoacyl-tRNA biosynthesis; selenocysteinyl-tRNA(Sec) biosynthesis; L-seryl-tRNA(Sec) from L-serine and tRNA(Sec): step 1/1. In terms of biological role, catalyzes the attachment of serine to tRNA(Ser). Is also able to aminoacylate tRNA(Sec) with serine, to form the misacylated tRNA L-seryl-tRNA(Sec), which will be further converted into selenocysteinyl-tRNA(Sec). This is Serine--tRNA ligase from Xanthomonas campestris pv. campestris (strain 8004).